Consider the following 355-residue polypeptide: UDP-N-acetylglucosamine--N-acetylmuramyl-(pentapeptide) pyrophosphoryl-undecaprenol N-acetylglucosamine transferase (355 aa).

UDP-N-acetyl-alpha-D-glucosamine contacts are provided by residues 15-17, asparagine 127, arginine 163, serine 191, isoleucine 244, 263-268, and glutamine 288; these read TGG and ALTVSE.

This sequence belongs to the glycosyltransferase 28 family. MurG subfamily.

Its subcellular location is the cell inner membrane. The catalysed reaction is di-trans,octa-cis-undecaprenyl diphospho-N-acetyl-alpha-D-muramoyl-L-alanyl-D-glutamyl-meso-2,6-diaminopimeloyl-D-alanyl-D-alanine + UDP-N-acetyl-alpha-D-glucosamine = di-trans,octa-cis-undecaprenyl diphospho-[N-acetyl-alpha-D-glucosaminyl-(1-&gt;4)]-N-acetyl-alpha-D-muramoyl-L-alanyl-D-glutamyl-meso-2,6-diaminopimeloyl-D-alanyl-D-alanine + UDP + H(+). It functions in the pathway cell wall biogenesis; peptidoglycan biosynthesis. In terms of biological role, cell wall formation. Catalyzes the transfer of a GlcNAc subunit on undecaprenyl-pyrophosphoryl-MurNAc-pentapeptide (lipid intermediate I) to form undecaprenyl-pyrophosphoryl-MurNAc-(pentapeptide)GlcNAc (lipid intermediate II). The chain is UDP-N-acetylglucosamine--N-acetylmuramyl-(pentapeptide) pyrophosphoryl-undecaprenol N-acetylglucosamine transferase from Photorhabdus laumondii subsp. laumondii (strain DSM 15139 / CIP 105565 / TT01) (Photorhabdus luminescens subsp. laumondii).